A 314-amino-acid polypeptide reads, in one-letter code: ATP synthase gamma chain (314 aa).

The protein belongs to the ATPase gamma chain family. As to quaternary structure, F-type ATPases have 2 components, CF(1) - the catalytic core - and CF(0) - the membrane proton channel. CF(1) has five subunits: alpha(3), beta(3), gamma(1), delta(1), epsilon(1). CF(0) has three main subunits: a, b and c.

The protein localises to the cellular thylakoid membrane. Its function is as follows. Produces ATP from ADP in the presence of a proton gradient across the membrane. The gamma chain is believed to be important in regulating ATPase activity and the flow of protons through the CF(0) complex. In Synechococcus sp. (strain JA-3-3Ab) (Cyanobacteria bacterium Yellowstone A-Prime), this protein is ATP synthase gamma chain.